A 417-amino-acid polypeptide reads, in one-letter code: Neuropeptide FF receptor 2 (417 aa).

Residues 1–45 (MSEKWDSNSSESWNHIWSGNDTQHHWYSDINITYVNYYLHQPQVA) are Extracellular-facing. N-linked (GlcNAc...) asparagine glycans are attached at residues asparagine 8, asparagine 20, and asparagine 31. The chain crosses the membrane as a helical span at residues 46-66 (AVFISSYLLIFVLCMVGNTVV). The Cytoplasmic portion of the chain corresponds to 67–82 (CFIVIRNRHMHTVTNF). A helical transmembrane segment spans residues 83–103 (FILNLAISDLLVGIFCMPITL). The Extracellular segment spans residues 104–119 (LDNIIAGWPFGSSMCK). Cysteine 118 and cysteine 206 are joined by a disulfide. The chain crosses the membrane as a helical span at residues 120–140 (ISGLVQGISVAASVFTLVAIA). Residues 141–160 (VDRFRCVVYPFKPKLTVKTA) are Cytoplasmic-facing. A helical membrane pass occupies residues 161-181 (FVTIVIIWGLAIAIMTPSAIM). Residues 182–217 (LHVQEEKYYRVRLSSHNKTSTVYWCREDWPRHEMRR) are Extracellular-facing. N-linked (GlcNAc...) asparagine glycosylation is present at asparagine 198. Residues 218–238 (IYTTVLFATIYLAPLSLIVIM) traverse the membrane as a helical segment. Topologically, residues 239–274 (YARIGASLFKTAAHCTGKQRPVQWHVSKKKQKVIKM) are cytoplasmic. The chain crosses the membrane as a helical span at residues 275-295 (LLTVALLFILSWLPLWTLMML). Topologically, residues 296–310 (SDYTDLSPNKLRIIN) are extracellular. A helical transmembrane segment spans residues 311 to 331 (IYIYPFAHWLAFCNSSVNPII). Residues 332–417 (YGFFNENFRN…MGEATNSTVA (86 aa)) lie on the Cytoplasmic side of the membrane. The disordered stretch occupies residues 382–401 (SQNPGGENLGCGKSADNPTQ).

The protein belongs to the G-protein coupled receptor 1 family.

It is found in the cell membrane. Receptor for NPAF (A-18-F-amide) and NPFF (F-8-F-amide) neuropeptides, also known as morphine-modulating peptides. Can also be activated by a variety of naturally occurring or synthetic FMRF-amide like ligands. This receptor mediates its action by association with G proteins that activate a phosphatidylinositol-calcium second messenger system. This Mus musculus (Mouse) protein is Neuropeptide FF receptor 2 (Npffr2).